The following is a 223-amino-acid chain: UPF0441 protein YgiB (223 aa).

Residues T178–T195 show a composition bias toward low complexity. The segment at T178–G223 is disordered. Residues A204–G223 are compositionally biased toward polar residues.

Belongs to the UPF0441 family.

This chain is UPF0441 protein YgiB, found in Salmonella paratyphi A (strain ATCC 9150 / SARB42).